Reading from the N-terminus, the 217-residue chain is LexA repressor (217 aa).

A DNA-binding region (H-T-H motif) is located at residues 28–48; it reads RAEIAAEFGFSSPNAAEEHLR. Residues serine 136 and lysine 173 each act as for autocatalytic cleavage activity in the active site.

Belongs to the peptidase S24 family. In terms of assembly, homodimer.

The catalysed reaction is Hydrolysis of Ala-|-Gly bond in repressor LexA.. Represses a number of genes involved in the response to DNA damage (SOS response), including recA and lexA. In the presence of single-stranded DNA, RecA interacts with LexA causing an autocatalytic cleavage which disrupts the DNA-binding part of LexA, leading to derepression of the SOS regulon and eventually DNA repair. The polypeptide is LexA repressor (Cupriavidus necator (strain ATCC 17699 / DSM 428 / KCTC 22496 / NCIMB 10442 / H16 / Stanier 337) (Ralstonia eutropha)).